The chain runs to 446 residues: T-box transcription factor TBX19 (446 aa).

Positions 43–216 (LEDAPLWQRF…YNPFAKAFLD (174 aa)) form a DNA-binding region, T-box.

It localises to the nucleus. Transcriptional regulator involved in developmental processes. Can activate POMC gene expression and repress the alpha glycoprotein subunit and thyroid-stimulating hormone beta promoters. This is T-box transcription factor TBX19 from Mus musculus (Mouse).